The chain runs to 361 residues: Phosphate acyltransferase (361 aa).

The protein belongs to the PlsX family. As to quaternary structure, homodimer. Probably interacts with PlsY.

It is found in the cytoplasm. It catalyses the reaction a fatty acyl-[ACP] + phosphate = an acyl phosphate + holo-[ACP]. It functions in the pathway lipid metabolism; phospholipid metabolism. In terms of biological role, catalyzes the reversible formation of acyl-phosphate (acyl-PO(4)) from acyl-[acyl-carrier-protein] (acyl-ACP). This enzyme utilizes acyl-ACP as fatty acyl donor, but not acyl-CoA. The polypeptide is Phosphate acyltransferase (Anaeromyxobacter dehalogenans (strain 2CP-C)).